A 946-amino-acid polypeptide reads, in one-letter code: Protein TMA108 (946 aa).

Serine 2 carries the N-acetylserine modification. 293-297 provides a ligand contact to substrate; the sequence is MAMEN. Histidine 330 provides a ligand contact to Zn(2+). Glutamate 331 (proton acceptor) is an active-site residue. 2 residues coordinate Zn(2+): histidine 334 and glutamate 353.

The protein belongs to the peptidase M1 family. In terms of assembly, associates with ribosomal complexes. Zn(2+) is required as a cofactor.

It is found in the cytoplasm. In terms of biological role, putative zinc aminopeptidase which may be involved in ribosome biogenesis. This chain is Protein TMA108 (TMA108), found in Saccharomyces cerevisiae (strain ATCC 204508 / S288c) (Baker's yeast).